Consider the following 135-residue polypeptide: Small ribosomal subunit protein uS8 (135 aa).

Belongs to the universal ribosomal protein uS8 family. Part of the 30S ribosomal subunit. Contacts proteins S5 and S12.

One of the primary rRNA binding proteins, it binds directly to 16S rRNA central domain where it helps coordinate assembly of the platform of the 30S subunit. In Parafrankia sp. (strain EAN1pec), this protein is Small ribosomal subunit protein uS8.